A 274-amino-acid chain; its full sequence is MLSVAARSGPFAPVLSATSRGVAGALRPLVQATVPATPEQPVLDLKRPFLSRESLSGQAVRRPLVASVGLNVPASVCYSHTDVKVPDFSEYRRPEVLDSTKSSRESSEARKGFSYLVTAVTTVGVAYAAKNAVTQFVSSMSASADVLALAKIEIKLSDIPEGKNMAFKWRGKPLFVRHRTQKEIEQEAAVELSQLRDPQHDLDRVKRPEWVILIGVCTHLGCVPIANAGDFGGYYCPCHGSHYDASGRIRLGPAPLNLEVPTYEFTSDDMVIVG.

Over 79-103 the chain is Mitochondrial matrix; sequence SHTDVKVPDFSEYRRPEVLDSTKSS. A helical transmembrane segment spans residues 104 to 140; sequence RESSEARKGFSYLVTAVTTVGVAYAAKNAVTQFVSSM. At 141 to 274 the chain is on the mitochondrial intermembrane side; the sequence is SASADVLALA…FTSDDMVIVG (134 aa). The Rieske domain occupies 187-272; the sequence is EAAVELSQLR…YEFTSDDMVI (86 aa). The [2Fe-2S] cluster site is built by Cys-217, His-219, Cys-236, His-239, and Ser-241. Cysteines 222 and 238 form a disulfide.

It belongs to the Rieske iron-sulfur protein family. Component of the ubiquinol-cytochrome c oxidoreductase (cytochrome b-c1 complex, complex III, CIII), a multisubunit enzyme composed of 11 subunits. The complex is composed of 3 respiratory subunits cytochrome b, cytochrome c1 and Rieske protein UQCRFS1, 2 core protein subunits UQCRC1/QCR1 and UQCRC2/QCR2, and 6 low-molecular weight protein subunits UQCRH/QCR6, UQCRB/QCR7, UQCRQ/QCR8, UQCR10/QCR9, UQCR11/QCR10 and subunit 9, the cleavage product of Rieske protein UQCRFS1. The complex exists as an obligatory dimer and forms supercomplexes (SCs) in the inner mitochondrial membrane with NADH-ubiquinone oxidoreductase (complex I, CI) and cytochrome c oxidase (complex IV, CIV), resulting in different assemblies (supercomplex SCI(1)III(2)IV(1) and megacomplex MCI(2)III(2)IV(2)). Incorporation of the Rieske protein UQCRFS1 is the penultimate step in complex III assembly. Interacts with TTC19, which is involved in the clearance of UQCRFS1 fragments. As to quaternary structure, component of the ubiquinol-cytochrome c oxidoreductase (cytochrome b-c1 complex, complex III, CIII). Subunit 9 corresponds to the mitochondrial targeting sequence (MTS) of Rieske protein UQCRFS1. It is retained after processing and incorporated inside complex III, where it remains bound to the complex and localizes between the 2 core subunits UQCRC1/QCR1 and UQCRC2/QCR2. Requires [2Fe-2S] cluster as cofactor. Proteolytic processing is necessary for the correct insertion of UQCRFS1 in the complex III dimer. Several fragments are generated during UQCRFS1 insertion, most probably due to the endogenous matrix-processing peptidase (MPP) activity of the 2 core protein subunits UQCRC1/QCR1 and UQCRC2/QCR2, which are homologous to the 2 mitochondrial-processing peptidase (MPP) subunits beta-MPP and alpha-MPP respectively. The action of the protease is also necessary for the clearance of the UQCRFS1 fragments.

The protein localises to the mitochondrion inner membrane. It catalyses the reaction a quinol + 2 Fe(III)-[cytochrome c](out) = a quinone + 2 Fe(II)-[cytochrome c](out) + 2 H(+)(out). In terms of biological role, component of the ubiquinol-cytochrome c oxidoreductase, a multisubunit transmembrane complex that is part of the mitochondrial electron transport chain which drives oxidative phosphorylation. The respiratory chain contains 3 multisubunit complexes succinate dehydrogenase (complex II, CII), ubiquinol-cytochrome c oxidoreductase (cytochrome b-c1 complex, complex III, CIII) and cytochrome c oxidase (complex IV, CIV), that cooperate to transfer electrons derived from NADH and succinate to molecular oxygen, creating an electrochemical gradient over the inner membrane that drives transmembrane transport and the ATP synthase. The cytochrome b-c1 complex catalyzes electron transfer from ubiquinol to cytochrome c, linking this redox reaction to translocation of protons across the mitochondrial inner membrane, with protons being carried across the membrane as hydrogens on the quinol. In the process called Q cycle, 2 protons are consumed from the matrix, 4 protons are released into the intermembrane space and 2 electrons are passed to cytochrome c. The Rieske protein is a catalytic core subunit containing a [2Fe-2S] iron-sulfur cluster. It cycles between 2 conformational states during catalysis to transfer electrons from the quinol bound in the Q(0) site in cytochrome b to cytochrome c1. Incorporation of UQCRFS1 is the penultimate step in complex III assembly. Its function is as follows. Component of the ubiquinol-cytochrome c oxidoreductase (cytochrome b-c1 complex, complex III, CIII). UQCRFS1 undergoes proteolytic processing once it is incorporated in the complex III dimer. One of the fragments, called subunit 9, corresponds to its mitochondrial targeting sequence (MTS). The proteolytic processing is necessary for the correct insertion of UQCRFS1 in the complex III dimer, but the persistence of UQCRFS1-derived fragments may prevent newly imported UQCRFS1 to be processed and assembled into complex III and is detrimental for the complex III structure and function. The protein is Cytochrome b-c1 complex subunit Rieske, mitochondrial (UQCRFS1) of Symphalangus syndactylus (Siamang).